Reading from the N-terminus, the 173-residue chain is Translation initiation factor IF-3 (173 aa).

Belongs to the IF-3 family. Monomer.

Its subcellular location is the cytoplasm. Its function is as follows. IF-3 binds to the 30S ribosomal subunit and shifts the equilibrium between 70S ribosomes and their 50S and 30S subunits in favor of the free subunits, thus enhancing the availability of 30S subunits on which protein synthesis initiation begins. The sequence is that of Translation initiation factor IF-3 from Caulobacter vibrioides (strain ATCC 19089 / CIP 103742 / CB 15) (Caulobacter crescentus).